We begin with the raw amino-acid sequence, 261 residues long: Adenosylcobinamide-GDP ribazoletransferase (261 aa).

The next 7 helical transmembrane spans lie at 4–26 (GLNGLLLAFQFLTTVPITRQIPW), 40–60 (LTGLVLGGLLVSLYLLLSPFL), 62–82 (PLVLAALLVTLSIFYSGGLHL), 110–130 (VGAFAVMTTILLIGWKVLLLM), 140–160 (FTWLLLLVPVCLRWMIIVQLI), 197–217 (CFLLLQNVILTLCFLLMIWLF), and 237–257 (IGASIEGGELFLWGIMWTFFL).

Belongs to the CobS family. Mg(2+) serves as cofactor.

It localises to the cell membrane. The catalysed reaction is alpha-ribazole + adenosylcob(III)inamide-GDP = adenosylcob(III)alamin + GMP + H(+). It catalyses the reaction alpha-ribazole 5'-phosphate + adenosylcob(III)inamide-GDP = adenosylcob(III)alamin 5'-phosphate + GMP + H(+). The protein operates within cofactor biosynthesis; adenosylcobalamin biosynthesis; adenosylcobalamin from cob(II)yrinate a,c-diamide: step 7/7. Its function is as follows. Joins adenosylcobinamide-GDP and alpha-ribazole to generate adenosylcobalamin (Ado-cobalamin). Also synthesizes adenosylcobalamin 5'-phosphate from adenosylcobinamide-GDP and alpha-ribazole 5'-phosphate. This Halalkalibacterium halodurans (strain ATCC BAA-125 / DSM 18197 / FERM 7344 / JCM 9153 / C-125) (Bacillus halodurans) protein is Adenosylcobinamide-GDP ribazoletransferase.